The sequence spans 443 residues: Zinc finger protein 713 (443 aa).

Residues 1–10 (MPSQNAVFSQ) are compositionally biased toward polar residues. Disordered stretches follow at residues 1–23 (MPSQ…NDGS) and 99–118 (DTHP…TSQN). Positions 32–102 (LTFQDVAVDF…ERDSLLDTHP (71 aa)) constitute a KRAB domain. A compositionally biased stretch (basic and acidic residues) spans 99–112 (DTHPDGENRPEIKK). The C2H2-type 1; degenerate zinc-finger motif lies at 255-280 (HTAEKPSECGKAFSHTSSLSQPQMLL). 5 C2H2-type zinc fingers span residues 286–308 (YKCD…QRIH), 314–336 (FICN…LRIH), 342–364 (YKCN…HRLH), 370–392 (YECG…ERTH), and 398–420 (YKCN…RKIH).

The protein belongs to the krueppel C2H2-type zinc-finger protein family. Expressed in fetal and adult brain.

Its subcellular location is the nucleus. In terms of biological role, may be involved in transcriptional regulation. The protein is Zinc finger protein 713 of Homo sapiens (Human).